A 285-amino-acid chain; its full sequence is Cold sensitive U2 snRNA suppressor 2 (285 aa).

Positions 45–130 (TSIYISGLPT…KQIRVERAQF (86 aa)) constitute an RRM 1 domain. Over residues 135–149 (GDNMHGKENDLKEFN) the composition is skewed to basic and acidic residues. The segment at 135 to 154 (GDNMHGKENDLKEFNGPEPP) is disordered. The residue at position 163 (Ser163) is a Phosphoserine. In terms of domain architecture, RRM 2 spans 183-265 (RTVIFANVFN…QKLLAFISGD (83 aa)). Residues 265–285 (DENTSSTSDKNEDSEVEDDLI) form a disordered region. Acidic residues predominate over residues 276-285 (EDSEVEDDLI).

It belongs to the HTATSF1 family. Interacts with PRP11. Associates with the U2 snRNA.

U2 snRNP protein which helps to refold U2 into a structure favorable for its binding to SF3b and SF3a prior to spliceosome assembly. Mediates functional interactions between U2 RNA and PRP5. Enforces ATP dependence during formation of the prespliceosome by brokering an interaction between PRP5 and the U2 snRNP that depends on correct U2 RNA structure. The polypeptide is Cold sensitive U2 snRNA suppressor 2 (CUS2) (Saccharomyces cerevisiae (strain ATCC 204508 / S288c) (Baker's yeast)).